A 413-amino-acid chain; its full sequence is Protein FAM8A1 (413 aa).

Basic and acidic residues predominate over residues 1 to 10 (MAEGPEEARG). Positions 1–105 (MAEGPEEARG…PEAAAPRERP (105 aa)) are disordered. Residues 49–64 (APGRPTAPGLAAAAAA) are compositionally biased toward low complexity. Residues 65 to 78 (DKLEPPRELRKRGE) are compositionally biased toward basic and acidic residues. The necessary and sufficient to interact with SYVN1 stretch occupies residues 107–139 (RLSAREYSRQVHEWLWQSYCGYLTWHSGLAAFP). Residues 217–236 (PVTRVGSAAPSRSPSETGRQ) form a disordered region. Ser-229 bears the Phosphoserine mark. The RDD domain occupies 242–408 (VIPSLAHRFM…DIVAGTIVVK (167 aa)). 3 helical membrane-spanning segments follow: residues 257–277 (FFILFFIKATIVLSIMHLSGI), 304–324 (MMVVALIYRLLVCFYEIICIW), and 371–391 (ALIKNFSIASFFPAFITLLFF).

Component of the HRD1 complex, which comprises at least SYNV1/HRD1, FAM8A1, HERPUD1/HERP, OS9, SEL1L and UBE2J1. This interaction stabilizes FAM8A1 protein, preventing its proteasomal degradation. FAM8A1 binding to SYNV1 may promote recruitment of HERPUD1 to the HRD1 complex. In terms of tissue distribution, ubiquitously expressed, with a higher level of expression in testis.

It localises to the membrane. In terms of biological role, plays a role in the assembly of the HRD1 complex, a complex involved in the ubiquitin-proteasome-dependent process of ER-associated degradation (ERAD). This is Protein FAM8A1 (FAM8A1) from Homo sapiens (Human).